Reading from the N-terminus, the 195-residue chain is Ribosomal RNA small subunit methyltransferase G (195 aa).

Residues glycine 60, leucine 65, 114–115 (IE), and arginine 128 each bind S-adenosyl-L-methionine.

This sequence belongs to the methyltransferase superfamily. RNA methyltransferase RsmG family.

Its subcellular location is the cytoplasm. The enzyme catalyses guanosine(527) in 16S rRNA + S-adenosyl-L-methionine = N(7)-methylguanosine(527) in 16S rRNA + S-adenosyl-L-homocysteine. Its function is as follows. Specifically methylates the N7 position of guanine in position 527 of 16S rRNA. This is Ribosomal RNA small subunit methyltransferase G from Dinoroseobacter shibae (strain DSM 16493 / NCIMB 14021 / DFL 12).